Here is a 127-residue protein sequence, read N- to C-terminus: Large ribosomal subunit protein bL12 (127 aa).

Belongs to the bacterial ribosomal protein bL12 family. As to quaternary structure, homodimer. Part of the ribosomal stalk of the 50S ribosomal subunit. Forms a multimeric L10(L12)X complex, where L10 forms an elongated spine to which 2 to 4 L12 dimers bind in a sequential fashion. Binds GTP-bound translation factors.

Forms part of the ribosomal stalk which helps the ribosome interact with GTP-bound translation factors. Is thus essential for accurate translation. The protein is Large ribosomal subunit protein bL12 of Leptospira interrogans serogroup Icterohaemorrhagiae serovar copenhageni (strain Fiocruz L1-130).